The chain runs to 303 residues: Ferrochelatase (303 aa).

2 residues coordinate Fe cation: histidine 185 and glutamate 262.

Belongs to the ferrochelatase family.

Its subcellular location is the cytoplasm. The enzyme catalyses heme b + 2 H(+) = protoporphyrin IX + Fe(2+). It functions in the pathway porphyrin-containing compound metabolism; protoheme biosynthesis; protoheme from protoporphyrin-IX: step 1/1. Catalyzes the ferrous insertion into protoporphyrin IX. The polypeptide is Ferrochelatase (Campylobacter jejuni (strain RM1221)).